We begin with the raw amino-acid sequence, 123 residues long: EVKLVESGGGLVQPGGSLRLSCATSGFTFSDFYMEWVRQPPGKRLEWIAASRNKANDYTTEYSASVKGRFIVSRDTSQSILYLQMNALRAEDTAIYYCARDYYDYPHWYFDVWGAGTTVTVSS.

In terms of domain architecture, Ig-like spans Glu1–Gly114.

The protein is Ig heavy chain V region HPCM6 of Mus musculus (Mouse).